Consider the following 854-residue polypeptide: Envelope glycoprotein gp160 (854 aa).

A signal peptide spans 1-20 (MGRLLIKILIIAIGISIGIG). The Extracellular portion of the chain corresponds to 21–705 (NLYVTVFYGI…IILGLRFAWV (685 aa)). An N-linked (GlcNAc...) asparagine; by host glycan is attached at asparagine 35. An intrachain disulfide couples cysteine 42 to cysteine 55. 7 N-linked (GlcNAc...) asparagine; by host glycosylation sites follow: asparagine 68, asparagine 115, asparagine 136, asparagine 153, asparagine 168, asparagine 182, and asparagine 199. 5 cysteine pairs are disulfide-bonded: cysteine 99-cysteine 207, cysteine 106-cysteine 198, cysteine 111-cysteine 154, cysteine 220-cysteine 250, and cysteine 230-cysteine 242. A V1 region spans residues 111-153 (CVELNGTATTKATTTATTTMTTPCQNCSTEQIEGEMAEEPASN). A V2 region spans residues 154–198 (CTFAIAGYQRDVKKNYSMTWYDQELVCNNKTGSEKGSKDCYMIHC). 13 N-linked (GlcNAc...) asparagine; by host glycosylation sites follow: asparagine 244, asparagine 255, asparagine 265, asparagine 271, asparagine 283, asparagine 295, asparagine 305, asparagine 355, asparagine 400, asparagine 409, asparagine 458, asparagine 472, and asparagine 478. The tract at residues 300–332 (CRRPGNKTVLPVTIMAGLVFHSQKYNTRLKQAW) is V3. A disulfide bond links cysteine 300 and cysteine 333. Cystine bridges form between cysteine 382–cysteine 457 and cysteine 389–cysteine 430. The interval 389 to 430 (CKMDWFINYLNNRTEDAEGTNRTCDKGKPGPGPCVQRTYVAC) is V4. Positions 473-481 (KSGPINVTL) are V5. The tract at residues 523–543 (VPFVLGFLGFLGAAGTAMGAA) is fusion peptide. The segment at 586–602 (LNARVTALEKYLEDQAR) is immunosuppression. N-linked (GlcNAc...) asparagine; by host glycosylation is found at asparagine 630 and asparagine 646. Positions 633–672 (WLEWERQINALEGNITQLLEEAQNQESKNLDLYQKLDDWS) form a coiled coil. Residues 667-688 (KLDDWSGFWSWFSLSTWLGYVK) form an MPER; binding to GalCer region. A helical transmembrane segment spans residues 706–726 (LWGCIRNIRQGYNPLPQIHIH). The short motif at 717-720 (YNPL) is the YXXL motif; contains endocytosis signal element. Topologically, residues 727–854 (SSAERPDNGG…VRQGLEKVLG (128 aa)) are cytoplasmic.

In terms of assembly, the mature envelope protein (Env) consists of a homotrimer of non-covalently associated gp120-gp41 heterodimers. The resulting complex protrudes from the virus surface as a spike. Interacts with host CD4 and CCR5. Gp120 also interacts with the C-type lectins CD209/DC-SIGN and CLEC4M/DC-SIGNR (collectively referred to as DC-SIGN(R)). As to quaternary structure, the mature envelope protein (Env) consists of a homotrimer of non-covalently associated gp120-gp41 heterodimers. The resulting complex protrudes from the virus surface as a spike. In terms of processing, specific enzymatic cleavages in vivo yield mature proteins. Envelope glycoproteins are synthesized as an inactive precursor that is heavily N-glycosylated and processed likely by host cell furin in the Golgi to yield the mature SU and TM proteins. The cleavage site between SU and TM requires the minimal sequence [KR]-X-[KR]-R.

The protein localises to the virion membrane. Its subcellular location is the host cell membrane. It localises to the host endosome membrane. The surface protein gp120 (SU) attaches the virus to the host lymphoid cell by binding to the primary receptor CD4. This interaction induces a structural rearrangement creating a high affinity binding site for a chemokine coreceptor like CCR5. This peculiar 2 stage receptor-interaction strategy allows gp120 to maintain the highly conserved coreceptor-binding site in a cryptic conformation, protected from neutralizing antibodies. These changes are transmitted to the transmembrane protein gp41 and are thought to activate its fusogenic potential by unmasking its fusion peptide. Its function is as follows. Surface protein gp120 (SU) may target the virus to gut-associated lymphoid tissue (GALT) by binding host ITGA4/ITGB7 (alpha-4/beta-7 integrins), a complex that mediates T-cell migration to the GALT. Interaction between gp120 and ITGA4/ITGB7 would allow the virus to enter GALT early in the infection, infecting and killing most of GALT's resting CD4+ T-cells. This T-cell depletion is believed to be the major insult to the host immune system leading to AIDS. In terms of biological role, the surface protein gp120 is a ligand for CD209/DC-SIGN and CLEC4M/DC-SIGNR, which are respectively found on dendritic cells (DCs), and on endothelial cells of liver sinusoids and lymph node sinuses. These interactions allow capture of viral particles at mucosal surfaces by these cells and subsequent transmission to permissive cells. DCs are professional antigen presenting cells, critical for host immunity by inducing specific immune responses against a broad variety of pathogens. They act as sentinels in various tissues where they take up antigen, process it, and present it to T-cells following migration to lymphoid organs. SIV subverts the migration properties of dendritic cells to gain access to CD4+ T-cells in lymph nodes. Virus transmission to permissive T-cells occurs either in trans (without DCs infection, through viral capture and transmission), or in cis (following DCs productive infection, through the usual CD4-gp120 interaction), thereby inducing a robust infection. In trans infection, bound virions remain infectious over days and it is proposed that they are not degraded, but protected in non-lysosomal acidic organelles within the DCs close to the cell membrane thus contributing to the viral infectious potential during DCs' migration from the periphery to the lymphoid tissues. On arrival at lymphoid tissues, intact virions recycle back to DCs' cell surface allowing virus transmission to CD4+ T-cells. Virion capture also seems to lead to MHC-II-restricted viral antigen presentation, and probably to the activation of SIV-specific CD4+ cells. Functionally, the transmembrane protein gp41 (TM) acts as a class I viral fusion protein. Under the current model, the protein has at least 3 conformational states: pre-fusion native state, pre-hairpin intermediate state, and post-fusion hairpin state. During fusion of viral and target intracellular membranes, the coiled coil regions (heptad repeats) assume a trimer-of-hairpins structure, positioning the fusion peptide in close proximity to the C-terminal region of the ectodomain. The formation of this structure appears to drive apposition and subsequent fusion of viral and target cell membranes. Complete fusion occurs in host cell endosomes. The virus undergoes clathrin-dependent internalization long before endosomal fusion, thus minimizing the surface exposure of conserved viral epitopes during fusion and reducing the efficacy of inhibitors targeting these epitopes. Membranes fusion leads to delivery of the nucleocapsid into the cytoplasm. The envelope glycoprotein gp160 precursor down-modulates cell surface CD4 antigen by interacting with it in the endoplasmic reticulum and blocking its transport to the cell surface. Its function is as follows. The gp120-gp41 heterodimer allows rapid transcytosis of the virus through CD4 negative cells such as simple epithelial monolayers of the intestinal, rectal and endocervical epithelial barriers. Both gp120 and gp41 specifically recognize glycosphingolipids galactosyl-ceramide (GalCer) or 3' sulfo-galactosyl-ceramide (GalS) present in the lipid rafts structures of epithelial cells. Binding to these alternative receptors allows the rapid transcytosis of the virus through the epithelial cells. This transcytotic vesicle-mediated transport of virions from the apical side to the basolateral side of the epithelial cells does not involve infection of the cells themselves. This chain is Envelope glycoprotein gp160 (env), found in Cercopithecidae (Old World monkeys).